Here is an 84-residue protein sequence, read N- to C-terminus: Subtilisin-chymotrypsin inhibitor-2A (84 aa).

The tract at residues 1–23 is disordered; sequence MSSVEKKPEGVNTGAGDRHNLKT.

Belongs to the protease inhibitor I13 (potato type I serine protease inhibitor) family.

Its function is as follows. Inhibits both subtilisin and chymotrypsin. The sequence is that of Subtilisin-chymotrypsin inhibitor-2A from Hordeum vulgare (Barley).